Here is a 234-residue protein sequence, read N- to C-terminus: Thrombin-like enzyme contortrixobin (234 aa).

Residues 1-225 enclose the Peptidase S1 domain; the sequence is VVGGDECNIN…YNDWIQSIIA (225 aa). Intrachain disulfides connect Cys-7/Cys-139, Cys-26/Cys-42, Cys-74/Cys-232, Cys-118/Cys-186, Cys-150/Cys-165, and Cys-176/Cys-201. Residues His-41 and Asp-86 each act as charge relay system in the active site. The active-site Charge relay system is Ser-180.

As to quaternary structure, monomer. Post-translationally, not glycosylated. In terms of tissue distribution, expressed by the venom gland.

The protein resides in the secreted. Its activity is regulated as follows. Strongly inhibited by diisopropylfluorophosphate (DFP) and to a lesser extent by PMSF, benzamidine and 4,6-diamidino-2-phenylindole. Low inhibition by hirudin. In terms of biological role, thrombin-like snake venom serine protease that cleaves beta chain of fibrinogen (FGB), releasing fibrinopeptide B. Has a coagulant activity activating blood coagulation factors V (F5) and XIII (F13A1). The sequence is that of Thrombin-like enzyme contortrixobin from Agkistrodon contortrix contortrix (Southern copperhead).